Here is a 716-residue protein sequence, read N- to C-terminus: Phenylalanine/tyrosine ammonia-lyase (716 aa).

Catalysis depends on Tyr-110, which acts as the Proton donor/acceptor. The segment at residues 211–213 (ASG) is a cross-link (5-imidazolinone (Ala-Gly)). The residue at position 212 (Ser-212) is a 2,3-didehydroalanine (Ser). 7 residues coordinate (E)-cinnamate: Asn-270, Gln-360, Arg-366, Asn-397, Lys-468, Glu-496, and Asn-499.

The protein belongs to the PAL/histidase family. Homotetramer. Dimer of dimers. In terms of processing, contains an active site 4-methylidene-imidazol-5-one (MIO), which is formed autocatalytically by cyclization and dehydration of residues Ala-Ser-Gly.

It is found in the cytoplasm. It carries out the reaction L-phenylalanine = (E)-cinnamate + NH4(+). It catalyses the reaction L-tyrosine = (E)-4-coumarate + NH4(+). It functions in the pathway phenylpropanoid metabolism; trans-cinnamate biosynthesis; trans-cinnamate from L-phenylalanine: step 1/1. In terms of biological role, catalyzes the non-oxidative deamination of L-phenylalanine and L-tyrosine to form trans-cinnamic acid and p-coumaric acid respectively with similar efficiencies. Facilitates the commitment step in phenylpropanoid pathways that produce secondary metabolites such as lignins, coumarins and flavonoids. This is Phenylalanine/tyrosine ammonia-lyase (PAL) from Rhodotorula toruloides (Yeast).